The sequence spans 739 residues: Sulfate transporter (739 aa).

Residues 1 to 27 form a disordered region; that stretch reads MSSESKEQHNVSPRDSAEGNDSYPSGI. Ser12 and Ser16 each carry phosphoserine. The next 2 membrane-spanning stretches (helical) occupy residues 112-132 and 137-157; these read VMSGLIVGILLVPQSIAYSLL and PVYGLYTSFFASIIYFLLGTS. Residues Asn199 and Asn205 are each glycosylated (N-linked (GlcNAc...) asparagine). 2 helical membrane passes run 219–239 and 242–262; these read IMVGSTVTFIAGVYQVAMGFF and GFVSVYLSDALLSGFVTGASF. The N-linked (GlcNAc...) asparagine glycan is linked to Asn357. The next 4 helical transmembrane spans lie at 378-398, 420-440, 455-475, and 524-544; these read LIPSVAVDAIAISIIGFAITV, AIGFCNIIPSFFHCFTTSAAL, LSGVVTALVLLLVLLVIAPLF, and LLSTEIGLLVGVCFSIFCVIL. An STAS domain is found at 568–719; that stretch reads AYKNLQIKPG…YSVYEAMAFA (152 aa).

This sequence belongs to the SLC26A/SulP transporter (TC 2.A.53) family. Post-translationally, N-glycosylated. Ubiquitously expressed.

The protein resides in the cell membrane. It is found in the apical cell membrane. It catalyses the reaction oxalate(in) + sulfate(out) = oxalate(out) + sulfate(in). The catalysed reaction is sulfate(out) + 2 chloride(in) = sulfate(in) + 2 chloride(out). The enzyme catalyses oxalate(out) + 2 chloride(in) = oxalate(in) + 2 chloride(out). It carries out the reaction bromide(in) + chloride(out) = bromide(out) + chloride(in). It catalyses the reaction nitrate(in) + chloride(out) = nitrate(out) + chloride(in). The catalysed reaction is iodide(in) + chloride(out) = iodide(out) + chloride(in). An extracellular acidic pH inhibits chloride-sulfate and chloride-oxalate exchange activity whereas an intracellular acidic pH activates chloride-sulfate exchange with no effect on chloride-oxalate exchange activity. Functionally, sulfate transporter which mediates sulfate uptake into chondrocytes in order to maintain adequate sulfation of proteoglycans which is needed for cartilage development. Mediates electroneutral anion exchange of sulfate ions for oxalate ions and of sulfate and oxalate ions for chloride ions. Mediates exchange of sulfate and oxalate ions for hydroxyl ions and of chloride ions for bromide, iodide and nitrate ions. The coupling of sulfate transport to both hydroxyl and chloride ions likely serves to ensure transport at both acidic pH when most sulfate uptake is mediated by sulfate-hydroxide exchange and alkaline pH when most sulfate uptake is mediated by sulfate-chloride exchange. Essential for chondrocyte proliferation, differentiation and cell size expansion. The polypeptide is Sulfate transporter (SLC26A2) (Homo sapiens (Human)).